A 58-amino-acid chain; its full sequence is Large ribosomal subunit protein bL33 (58 aa).

This sequence belongs to the bacterial ribosomal protein bL33 family.

This chain is Large ribosomal subunit protein bL33, found in Brachyspira hyodysenteriae (strain ATCC 49526 / WA1).